Here is a 334-residue protein sequence, read N- to C-terminus: MLNTLIVGASGYAGAELVTYVNRHPHMNITALTVSAQSNDAGKLISDLHPQLKGIVDLPLQPMSDISEFSPGVDVVFLATAHEVSHDLAPQFLEAGCVVFDLSGAFRVNDATFYEKYYGFTHQYPELLEQAAYGLAEWCGNKLKEANLIAVPGCYPTAAQLALKPLIDADLLDLNQWPVINATSGVSGAGRKAAISNSFCEVSLQPYGVFTHRHQPEIATHLGADVIFTPHLGNFPRGILETITCRLKSGVTQAQVAQVLQQAYAHKPLVRLYDKGVPALKNVVGLPFCDIGFAVQGEHLIIVATEDNLLKGAAAQAVQCANIRFGYAETQSLI.

Cys-154 is an active-site residue.

It belongs to the NAGSA dehydrogenase family. Type 1 subfamily.

The protein resides in the cytoplasm. The catalysed reaction is N-acetyl-L-glutamate 5-semialdehyde + phosphate + NADP(+) = N-acetyl-L-glutamyl 5-phosphate + NADPH + H(+). It participates in amino-acid biosynthesis; L-arginine biosynthesis; N(2)-acetyl-L-ornithine from L-glutamate: step 3/4. In terms of biological role, catalyzes the NADPH-dependent reduction of N-acetyl-5-glutamyl phosphate to yield N-acetyl-L-glutamate 5-semialdehyde. In Escherichia coli (strain K12), this protein is N-acetyl-gamma-glutamyl-phosphate reductase.